Here is a 586-residue protein sequence, read N- to C-terminus: Phosphomethylpyrimidine synthase (586 aa).

The tract at residues 1–33 (MKQSVSAEQIELKSSLPGSKKVYVDGPREGMKV) is disordered. The segment covering 22–33 (VYVDGPREGMKV) has biased composition (basic and acidic residues). Substrate is bound by residues asparagine 193, methionine 222, tyrosine 251, histidine 287, 307-309 (SRG), 348-351 (DGLR), and glutamate 387. Position 391 (histidine 391) interacts with Zn(2+). A substrate-binding site is contributed by tyrosine 414. Histidine 455 contributes to the Zn(2+) binding site. [4Fe-4S] cluster contacts are provided by cysteine 535, cysteine 538, and cysteine 543.

It belongs to the ThiC family. Requires [4Fe-4S] cluster as cofactor.

The enzyme catalyses 5-amino-1-(5-phospho-beta-D-ribosyl)imidazole + S-adenosyl-L-methionine = 4-amino-2-methyl-5-(phosphooxymethyl)pyrimidine + CO + 5'-deoxyadenosine + formate + L-methionine + 3 H(+). It participates in cofactor biosynthesis; thiamine diphosphate biosynthesis. In terms of biological role, catalyzes the synthesis of the hydroxymethylpyrimidine phosphate (HMP-P) moiety of thiamine from aminoimidazole ribotide (AIR) in a radical S-adenosyl-L-methionine (SAM)-dependent reaction. The sequence is that of Phosphomethylpyrimidine synthase from Bacillus cereus (strain B4264).